We begin with the raw amino-acid sequence, 302 residues long: Cell division protein FtsQ (302 aa).

The tract at residues 1-41 is disordered; that stretch reads MPAVVRGGPPKPRRPRAEAPASPSKGKPAPRKAQPAAKLHA. Residues 1–50 lie on the Cytoplasmic side of the membrane; it reads MPAVVRGGPPKPRRPRAEAPASPSKGKPAPRKAQPAAKLHAARGVGLSPT. Positions 18 to 38 are enriched in low complexity; it reads EAPASPSKGKPAPRKAQPAAK. The helical transmembrane segment at 51–71 threads the bilayer; the sequence is VALSVAGAALGLGLVVMLATG. At 72–302 the chain is on the periplasmic side; that stretch reads HRAERLGASM…LPGQPAADGA (231 aa). A POTRA domain is found at 94–162; it reads FRLKTVHIRG…DTVLIAVEER (69 aa).

The protein belongs to the FtsQ/DivIB family. FtsQ subfamily.

The protein resides in the cell inner membrane. Its function is as follows. Essential cell division protein. In Caulobacter vibrioides (strain ATCC 19089 / CIP 103742 / CB 15) (Caulobacter crescentus), this protein is Cell division protein FtsQ.